Here is a 334-residue protein sequence, read N- to C-terminus: S-adenosylmethionine:tRNA ribosyltransferase-isomerase (334 aa).

Belongs to the QueA family. As to quaternary structure, monomer.

The protein resides in the cytoplasm. It catalyses the reaction 7-aminomethyl-7-carbaguanosine(34) in tRNA + S-adenosyl-L-methionine = epoxyqueuosine(34) in tRNA + adenine + L-methionine + 2 H(+). The protein operates within tRNA modification; tRNA-queuosine biosynthesis. Its function is as follows. Transfers and isomerizes the ribose moiety from AdoMet to the 7-aminomethyl group of 7-deazaguanine (preQ1-tRNA) to give epoxyqueuosine (oQ-tRNA). The chain is S-adenosylmethionine:tRNA ribosyltransferase-isomerase from Thermosipho melanesiensis (strain DSM 12029 / CIP 104789 / BI429).